Consider the following 337-residue polypeptide: Tetraacyldisaccharide 4'-kinase (337 aa).

55–62 lines the ATP pocket; sequence TAGGNGKT.

Belongs to the LpxK family.

It catalyses the reaction a lipid A disaccharide + ATP = a lipid IVA + ADP + H(+). Its pathway is glycolipid biosynthesis; lipid IV(A) biosynthesis; lipid IV(A) from (3R)-3-hydroxytetradecanoyl-[acyl-carrier-protein] and UDP-N-acetyl-alpha-D-glucosamine: step 6/6. In terms of biological role, transfers the gamma-phosphate of ATP to the 4'-position of a tetraacyldisaccharide 1-phosphate intermediate (termed DS-1-P) to form tetraacyldisaccharide 1,4'-bis-phosphate (lipid IVA). The polypeptide is Tetraacyldisaccharide 4'-kinase (Sodalis glossinidius (strain morsitans)).